The chain runs to 453 residues: MAKRRQKKRTHAQITPEQERDIPKSMVIRVGQTSLANHSLNQLVKDFRQIMQPHTAVKLKERKSNKLKDFVVMCGPLGVTHLFMFTQSEKTGNVSLKIARTPQGPTVTFQVLDYSLGRDIKKFLKRPKSLNNDDVLNPPLLVLNGFSTSKRSDEDDQDVNVEKVIVSMFQNIFPPLNPARTSLNSIKRIFMINKDRETGEISMRHYFIDIREVEISRNLKRLYKAKNNLSKTVPNLHRKEDISSLILDHDLGAYTSESEIEDDAIVRVVDNQDVKAKHSQTSLSQKTPVKMTDNEEREKGIEEEDVEMEEPKPSENSQPTPRKKAIKLTELGPRLTLKLVKIEDGICSGKVLHHEFVQKSSEEIKALEKRHAAKMRLKEQRRKEQEENIAKKKAVKDAKKQRKLERRKARAEEQGEGQGKDGAMSDDGSSSSEDEHYSDVPEDLDSDLFSEVE.

Residues 1-11 (MAKRRQKKRTH) are compositionally biased toward basic residues. Disordered regions lie at residues 1–22 (MAKRRQKKRTHAQITPEQERDI), 275–327 (KAKH…KAIK), and 373–453 (AKMR…SEVE). Positions 26 to 348 (MVIRVGQTSL…LVKIEDGICS (323 aa)) constitute a Brix domain. Residues 373-398 (AKMRLKEQRRKEQEENIAKKKAVKDA) are compositionally biased toward basic and acidic residues. The span at 399–409 (KKQRKLERRKA) shows a compositional bias: basic residues. A compositionally biased stretch (acidic residues) spans 440–453 (VPEDLDSDLFSEVE).

Part of a complex that includes BRX1, RPF1, RPF2 and SSF1 or SSF2.

Its subcellular location is the nucleus. It is found in the nucleolus. In terms of biological role, required for biogenesis of the 60S ribosomal subunit. This is Ribosome biogenesis protein SSF2 (SSF2) from Saccharomyces cerevisiae (strain ATCC 204508 / S288c) (Baker's yeast).